We begin with the raw amino-acid sequence, 581 residues long: Arginine--tRNA ligase (581 aa).

Residues 126–136 carry the 'HIGH' region motif; sequence PNLAKEMHVGH.

It belongs to the class-I aminoacyl-tRNA synthetase family. As to quaternary structure, monomer.

It localises to the cytoplasm. It catalyses the reaction tRNA(Arg) + L-arginine + ATP = L-arginyl-tRNA(Arg) + AMP + diphosphate. This is Arginine--tRNA ligase from Shewanella putrefaciens (strain CN-32 / ATCC BAA-453).